Reading from the N-terminus, the 100-residue chain is Movement protein TGBp3 (100 aa).

At 1–41 the chain is on the lumenal side; sequence MQTAPREYSTSGPTAVLAPTTNTQHYAPYSLYRFLSSHKLD. A helical membrane pass occupies residues 42–59; that stretch reads LLLGIALLVFLYVITAAP. Topologically, residues 60-100 are cytoplasmic; sequence KEVCQVVITGESVVIRNCQQPDRILANLNLSPWNGVKFPLL.

This sequence belongs to the Tymovirales TGBp3 protein family.

Its subcellular location is the host endoplasmic reticulum membrane. In terms of biological role, plays a role in viral cell-to-cell propagation, by facilitating genome transport to neighboring plant cells through plasmosdesmata. May induce the formation of granular vesicles derived from the Endoplasmic reticulum, which align on actin filaments. This chain is Movement protein TGBp3, found in Narcissus mosaic virus (NMV).